The sequence spans 497 residues: Aspartyl/glutamyl-tRNA(Asn/Gln) amidotransferase subunit B (497 aa).

The protein belongs to the GatB/GatE family. GatB subfamily. As to quaternary structure, heterotrimer of A, B and C subunits.

It catalyses the reaction L-glutamyl-tRNA(Gln) + L-glutamine + ATP + H2O = L-glutaminyl-tRNA(Gln) + L-glutamate + ADP + phosphate + H(+). It carries out the reaction L-aspartyl-tRNA(Asn) + L-glutamine + ATP + H2O = L-asparaginyl-tRNA(Asn) + L-glutamate + ADP + phosphate + 2 H(+). Allows the formation of correctly charged Asn-tRNA(Asn) or Gln-tRNA(Gln) through the transamidation of misacylated Asp-tRNA(Asn) or Glu-tRNA(Gln) in organisms which lack either or both of asparaginyl-tRNA or glutaminyl-tRNA synthetases. The reaction takes place in the presence of glutamine and ATP through an activated phospho-Asp-tRNA(Asn) or phospho-Glu-tRNA(Gln). The protein is Aspartyl/glutamyl-tRNA(Asn/Gln) amidotransferase subunit B of Novosphingobium aromaticivorans (strain ATCC 700278 / DSM 12444 / CCUG 56034 / CIP 105152 / NBRC 16084 / F199).